Reading from the N-terminus, the 545-residue chain is Probable bifunctional tRNA threonylcarbamoyladenosine biosynthesis protein (545 aa).

The tract at residues 1 to 329 is kae1; sequence MKNTFILGIE…YRTDDVKVTW (329 aa). Positions 113, 117, and 134 each coordinate Fe cation. L-threonylcarbamoyladenylate contacts are provided by residues 134-138, Asp-166, Gly-179, Glu-183, and Asn-262; that span reads YVSGA. Asp-290 contacts Fe cation. The Protein kinase domain occupies 340–545; it reads EISPGTSLKL…EEIKKRARYA (206 aa). ATP-binding positions include 353–361 and Lys-375; that span reads LDNGAEAIV. Asp-462 acts as the Proton acceptor; for kinase activity in catalysis.

This sequence in the N-terminal section; belongs to the KAE1 / TsaD family. The protein in the C-terminal section; belongs to the protein kinase superfamily. Tyr protein kinase family. BUD32 subfamily. Component of the KEOPS complex that consists of Kae1, Bud32, Cgi121 and Pcc1; the whole complex dimerizes. The cofactor is Fe(2+).

It is found in the cytoplasm. The catalysed reaction is L-seryl-[protein] + ATP = O-phospho-L-seryl-[protein] + ADP + H(+). The enzyme catalyses L-threonyl-[protein] + ATP = O-phospho-L-threonyl-[protein] + ADP + H(+). It carries out the reaction L-threonylcarbamoyladenylate + adenosine(37) in tRNA = N(6)-L-threonylcarbamoyladenosine(37) in tRNA + AMP + H(+). Its function is as follows. Required for the formation of a threonylcarbamoyl group on adenosine at position 37 (t(6)A37) in tRNAs that read codons beginning with adenine. Is a component of the KEOPS complex that is probably involved in the transfer of the threonylcarbamoyl moiety of threonylcarbamoyl-AMP (TC-AMP) to the N6 group of A37. The Kae1 domain likely plays a direct catalytic role in this reaction. The Bud32 domain probably displays kinase activity that regulates Kae1 function. In Methanosarcina barkeri (strain Fusaro / DSM 804), this protein is Probable bifunctional tRNA threonylcarbamoyladenosine biosynthesis protein.